The primary structure comprises 82 residues: Cytotoxin homolog Clbp-3 (82 aa).

The signal sequence occupies residues 1 to 21; that stretch reads MKTLLLTLVVVTIVCLDLGYT. Intrachain disulfides connect C24–C43, C36–C60, C64–C75, and C76–C81.

Belongs to the three-finger toxin family. Short-chain subfamily. Orphan group XV sub-subfamily. In terms of tissue distribution, expressed by the venom gland.

The protein localises to the secreted. It localises to the target cell membrane. Functionally, has low cytotoxic activity. The protein is Cytotoxin homolog Clbp-3 of Naja atra (Chinese cobra).